The sequence spans 506 residues: Zinc finger and SCAN domain containing protein 4C (506 aa).

Residues 1–24 (MASQQAPAKDLQTNNLEFTPTDSS) form a disordered region. Residues 37-119 (SAQLNFSPSN…RFMESLTDEC (83 aa)) enclose the SCAN box domain. C2H2-type zinc fingers lie at residues 395 to 417 (YKCE…QRTH), 424 to 446 (LLCV…EIIH), 452 to 474 (FKCS…EMIH), and 480 to 503 (YVCS…RNYH).

As to expression, embryonic stem (ES) cell-specific. Expressed in only 5% of ES cells at a given time, but nearly all ES cells express it at least once during 9 passages.

The protein localises to the nucleus. It localises to the chromosome. The protein resides in the telomere. Its function is as follows. Embryonic stem (ES) cell-specific transcription factor required to regulate ES cell pluripotency. Binds telomeres and plays a key role in genomic stability in ES cells by regulating telomere elongation. Acts as an activator of spontaneous telomere sister chromatid exchange (T-SCE) and telomere elongation in undifferentiated ES cells. In Mus musculus (Mouse), this protein is Zinc finger and SCAN domain containing protein 4C (Zscan4c).